The chain runs to 248 residues: Triosephosphate isomerase (248 aa).

Residue K12 participates in substrate binding. H94 acts as the Electrophile in catalysis. The active-site Proton acceptor is E165.

Belongs to the triosephosphate isomerase family. Homodimer.

The enzyme catalyses D-glyceraldehyde 3-phosphate = dihydroxyacetone phosphate. It participates in carbohydrate biosynthesis; gluconeogenesis. It functions in the pathway carbohydrate degradation; glycolysis; D-glyceraldehyde 3-phosphate from glycerone phosphate: step 1/1. The protein is Triosephosphate isomerase (Tpi) of Bombyx mori (Silk moth).